The chain runs to 130 residues: Secreted RxLR effector protein 66 (130 aa).

The first 21 residues, 1–21 (MHLRLLMSTVITATLIVSNNA), serve as a signal peptide directing secretion. The short motif at 32 to 62 (RALRGASTVGIAADNLLAAHFSPTLKHKESR) is the RxLR-dEER element. The helical transmembrane segment at 104 to 124 (GPAIAIFAGVAATFILIDYLI) threads the bilayer.

Belongs to the RxLR effector family.

The protein localises to the secreted. Its subcellular location is the host cytoplasm. It is found in the host nucleus. The protein resides in the membrane. In terms of biological role, effector that acts as a broad suppressor of cell death to interrupt plant immunity. Inhibits cell death induced by cell death-inducing proteins, including the PAMP elicitor INF1 from P.infestans. This Plasmopara viticola (Downy mildew of grapevine) protein is Secreted RxLR effector protein 66.